The primary structure comprises 318 residues: Protein W (318 aa).

2 disordered regions span residues methionine 1–glutamate 23 and serine 38–alanine 318. Over residues isoleucine 7–glycine 20 the composition is skewed to basic and acidic residues. The span at leucine 50–glycine 59 shows a compositional bias: polar residues. Phosphoserine; by host is present on serine 68. Positions arginine 83–alanine 101 are enriched in basic and acidic residues. Serine 125 carries the phosphoserine; by host modification. Over residues glycine 150–aspartate 168 the composition is skewed to basic and acidic residues. The segment covering alanine 191–alanine 206 has biased composition (polar residues). Serine 192, serine 249, serine 257, and serine 260 each carry phosphoserine; by host.

This is Protein W (P/V/C) from Sendai virus (strain Harris) (SeV).